Here is a 350-residue protein sequence, read N- to C-terminus: MFAITGGGTGGHLAIAKALAQEAQKNNQQSIYIGSQIGQDKTWFEGSSLFTHCYFLDSTGVVNKKGLGKIKAIFKQLKAAWEARNILKKHKIEYVISVGGFSAGGASIGAILSNTPLFIHEQNAIKGKLNEILTPFAKAIFGSFEGKSKNFIHTSYPVRDEFFTHSRVREKLHHLLFLGGSQGAKGINDFALQIVPELLKRGITIAHQCGERDFERIKKAYEHIGILDKVDVFAFDKEIVLRLQKADLCIARSGASSLWEMSANGLIGIFVPYPYAAKDHQYYNALHFTKQGLGLLLRESQLDMLRVFTFIESLQKQEDSLSEKSHLLMSKIQPNGAKEILEHITSLMSH.

UDP-N-acetyl-alpha-D-glucosamine contacts are provided by residues 9–11 (TGG), Asn123, Arg159, Ser181, and Gln281.

This sequence belongs to the glycosyltransferase 28 family. MurG subfamily.

The protein localises to the cell inner membrane. The catalysed reaction is di-trans,octa-cis-undecaprenyl diphospho-N-acetyl-alpha-D-muramoyl-L-alanyl-D-glutamyl-meso-2,6-diaminopimeloyl-D-alanyl-D-alanine + UDP-N-acetyl-alpha-D-glucosamine = di-trans,octa-cis-undecaprenyl diphospho-[N-acetyl-alpha-D-glucosaminyl-(1-&gt;4)]-N-acetyl-alpha-D-muramoyl-L-alanyl-D-glutamyl-meso-2,6-diaminopimeloyl-D-alanyl-D-alanine + UDP + H(+). The protein operates within cell wall biogenesis; peptidoglycan biosynthesis. Functionally, cell wall formation. Catalyzes the transfer of a GlcNAc subunit on undecaprenyl-pyrophosphoryl-MurNAc-pentapeptide (lipid intermediate I) to form undecaprenyl-pyrophosphoryl-MurNAc-(pentapeptide)GlcNAc (lipid intermediate II). The protein is UDP-N-acetylglucosamine--N-acetylmuramyl-(pentapeptide) pyrophosphoryl-undecaprenol N-acetylglucosamine transferase of Helicobacter hepaticus (strain ATCC 51449 / 3B1).